Here is a 323-residue protein sequence, read N- to C-terminus: MLTIITHLINPLLYMIPILLAVAFLTLIERKVLGYMQHRKGPNIVGPTGLIQPIADGVKLFIKEPVRPSTSSQTMFLIAPTMALALAMSIWAPLPMPFSLADLNLGILFILALSSLAVYTILGSGWSSNSKYALIGALRAVAQTISYEVTLGLILLCMIMLAGGFTYTTLMTTQEQMWLIIPGWPMAAMWYISTLAETNRAPFDLTEGESELVSGFNVEYAGGPFALFSLAEYANILMMNTLSYLILFLGSSFMNQPELTTISLMIKSSILSMIFLWVRASYPRFRYDQLMHLVWKNFLPITLAMTLWHISLPISMLGLPSQT.

A run of 8 helical transmembrane segments spans residues 8–28 (LINPLLYMIPILLAVAFLTLI), 75–95 (MFLIAPTMALALAMSIWAPLP), 105–125 (LGILFILALSSLAVYTILGSG), 151–171 (LGLILLCMIMLAGGFTYTTLM), 177–197 (MWLIIPGWPMAAMWYISTLAE), 234–254 (ANILMMNTLSYLILFLGSSFM), 258–278 (ELTTISLMIKSSILSMIFLWV), and 298–318 (FLPITLAMTLWHISLPISMLG).

It belongs to the complex I subunit 1 family. In terms of assembly, core subunit of respiratory chain NADH dehydrogenase (Complex I) which is composed of 45 different subunits.

The protein localises to the mitochondrion inner membrane. It carries out the reaction a ubiquinone + NADH + 5 H(+)(in) = a ubiquinol + NAD(+) + 4 H(+)(out). Core subunit of the mitochondrial membrane respiratory chain NADH dehydrogenase (Complex I) which catalyzes electron transfer from NADH through the respiratory chain, using ubiquinone as an electron acceptor. Essential for the catalytic activity and assembly of complex I. In Xenopus laevis (African clawed frog), this protein is NADH-ubiquinone oxidoreductase chain 1 (mt-nd1).